Consider the following 354-residue polypeptide: Putative ankyrin repeat protein L284 (354 aa).

3 ANK repeats span residues 201–230, 253–284, and 286–314; these read ILDD…LSND, SRYP…NPIV, and LHKA…DIDI.

This Acanthamoeba polyphaga (Amoeba) protein is Putative ankyrin repeat protein L284.